The following is a 398-amino-acid chain: Tyrosine--tRNA ligase (398 aa).

Residues 48-57 (PTGADIHLGH) carry the 'HIGH' region motif. A 'KMSKS' region motif is present at residues 235–239 (KMSKS). Lys-238 provides a ligand contact to ATP. Residues 334-398 (VKLAYLLGAT…GKNKFVRLVL (65 aa)) enclose the S4 RNA-binding domain.

The protein belongs to the class-I aminoacyl-tRNA synthetase family. TyrS type 2 subfamily. Homodimer.

The protein resides in the cytoplasm. It carries out the reaction tRNA(Tyr) + L-tyrosine + ATP = L-tyrosyl-tRNA(Tyr) + AMP + diphosphate + H(+). Functionally, catalyzes the attachment of tyrosine to tRNA(Tyr) in a two-step reaction: tyrosine is first activated by ATP to form Tyr-AMP and then transferred to the acceptor end of tRNA(Tyr). The sequence is that of Tyrosine--tRNA ligase from Trichormus variabilis (strain ATCC 29413 / PCC 7937) (Anabaena variabilis).